Reading from the N-terminus, the 257-residue chain is Cytochrome c oxidase subunit 3 (257 aa).

A run of 6 helical transmembrane segments spans residues proline 13–phenylalanine 33, leucine 36–tryptophan 56, glycine 80–phenylalanine 100, tyrosine 154–phenylalanine 174, phenylalanine 195–valine 215, and alanine 237–tryptophan 257.

It belongs to the cytochrome c oxidase subunit 3 family. In terms of assembly, component of the cytochrome c oxidase (complex IV, CIV), a multisubunit enzyme composed of a catalytic core of 3 subunits and several supernumerary subunits. The complex exists as a monomer or a dimer and forms supercomplexes (SCs) in the inner mitochondrial membrane with ubiquinol-cytochrome c oxidoreductase (cytochrome b-c1 complex, complex III, CIII).

It is found in the mitochondrion inner membrane. It carries out the reaction 4 Fe(II)-[cytochrome c] + O2 + 8 H(+)(in) = 4 Fe(III)-[cytochrome c] + 2 H2O + 4 H(+)(out). In terms of biological role, component of the cytochrome c oxidase, the last enzyme in the mitochondrial electron transport chain which drives oxidative phosphorylation. The respiratory chain contains 3 multisubunit complexes succinate dehydrogenase (complex II, CII), ubiquinol-cytochrome c oxidoreductase (cytochrome b-c1 complex, complex III, CIII) and cytochrome c oxidase (complex IV, CIV), that cooperate to transfer electrons derived from NADH and succinate to molecular oxygen, creating an electrochemical gradient over the inner membrane that drives transmembrane transport and the ATP synthase. Cytochrome c oxidase is the component of the respiratory chain that catalyzes the reduction of oxygen to water. Electrons originating from reduced cytochrome c in the intermembrane space (IMS) are transferred via the dinuclear copper A center (CU(A)) of subunit 2 and heme A of subunit 1 to the active site in subunit 1, a binuclear center (BNC) formed by heme A3 and copper B (CU(B)). The BNC reduces molecular oxygen to 2 water molecules using 4 electrons from cytochrome c in the IMS and 4 protons from the mitochondrial matrix. In Rhipicephalus sanguineus (Brown dog tick), this protein is Cytochrome c oxidase subunit 3 (COIII).